Consider the following 363-residue polypeptide: MPASKKISDRNHLGQVFDKLLNQIGESEEFELPEWLNKGKPTPYIFIRRNIYLTKKVKRRVEDDGIFCSCSSSSPGSSSTVCGSNCHCGMLFSSCSSSCKCGSECNNKPFQQRHVKKMKLIQTEKCGSGIVAEEEIEAGEFIIEYVGEVIDDKTCEERLWKMKHRGETNFYLCEITRDMVIDATHKGNKSRYINHSCNPNTQMQKWIIDGETRIGIFATRGIKKGEHLTYDYQFVQFGADQDCHCGAVGCRRKLGVKPSKPKIASDEAFNLVAHELAQTLPKVHQNGLVNRHIDAGKSWNNLSQRDTCSRNCIGVVIRLSRPTSDRCFGLVRHFDEYSRKHSVMFEDGVTEFVDMSREDWEIV.

Residues 63–114 (DDGIFCSCSSSSPGSSSTVCGSNCHCGMLFSSCSSSCKCGSECNNKPFQQRH) enclose the AWS domain. An SET domain is found at 116–233 (KKMKLIQTEK…KGEHLTYDYQ (118 aa)). Positions 239 to 255 (ADQDCHCGAVGCRRKLG) constitute a Post-SET domain.

It belongs to the class V-like SAM-binding methyltransferase superfamily. Histone-lysine methyltransferase family. SET2 subfamily.

Its subcellular location is the nucleus. It localises to the chromosome. The protein resides in the centromere. It catalyses the reaction L-lysyl-[histone] + S-adenosyl-L-methionine = N(6)-methyl-L-lysyl-[histone] + S-adenosyl-L-homocysteine + H(+). Functionally, histone methyltransferase. This chain is Histone-lysine N-methyltransferase ASHH3 (ASHH3), found in Arabidopsis thaliana (Mouse-ear cress).